The primary structure comprises 206 residues: Xanthine phosphoribosyltransferase (206 aa).

Residues leucine 28 and asparagine 35 each contribute to the xanthine site. Residue 136 to 140 (ANGQA) coordinates 5-phospho-alpha-D-ribose 1-diphosphate. Lysine 164 contacts xanthine.

This sequence belongs to the purine/pyrimidine phosphoribosyltransferase family. Xpt subfamily. Homodimer.

The protein localises to the cytoplasm. It carries out the reaction XMP + diphosphate = xanthine + 5-phospho-alpha-D-ribose 1-diphosphate. It participates in purine metabolism; XMP biosynthesis via salvage pathway; XMP from xanthine: step 1/1. Converts the preformed base xanthine, a product of nucleic acid breakdown, to xanthosine 5'-monophosphate (XMP), so it can be reused for RNA or DNA synthesis. In Oenococcus oeni (strain ATCC BAA-331 / PSU-1), this protein is Xanthine phosphoribosyltransferase.